Consider the following 214-residue polypeptide: Transmembrane emp24 domain-containing protein p24delta9 (214 aa).

Positions 1–24 are cleaved as a signal peptide; that stretch reads MFLRSLNLCTILLFLAISSQVSQS. Over 25-181 the chain is Lumenal; that stretch reads LHFELQSGRT…QNLNRATNSK (157 aa). The GOLD domain maps to 34–149; the sequence is TKCISEDIKS…VEVMEFDVKR (116 aa). Residues 164-177 are a coiled coil; sequence LREREEEMQNLNRA. At Arg-167 the chain carries Omega-N-methylated arginine. The helical transmembrane segment at 182–202 threads the bilayer; sequence MAWLSFLSLFVCLGVAGMQFV. The Cytoplasmic portion of the chain corresponds to 203–214; that stretch reads HLKTFFEKKKVI. The COPII vesicle coat-binding motif lies at 207–208; it reads FF. A COPI vesicle coat-binding motif is present at residues 207–214; the sequence is FFEKKKVI.

The protein belongs to the EMP24/GP25L family. As to quaternary structure, probably oligomerizes with other members of the EMP24/GP25L family. Associates with the COPI vesicle coat (coatomer). Associates with the COPII vesicle coat (coatomer).

It localises to the endoplasmic reticulum membrane. The protein resides in the golgi apparatus. The protein localises to the cis-Golgi network membrane. Its subcellular location is the golgi stack membrane. In terms of biological role, involved in vesicular protein trafficking. Mainly functions in the early secretory pathway. Thought to act as cargo receptor at the lumenal side for incorporation of secretory cargo molecules into transport vesicles and to be involved in vesicle coat formation at the cytoplasmic side. This Arabidopsis thaliana (Mouse-ear cress) protein is Transmembrane emp24 domain-containing protein p24delta9.